A 131-amino-acid polypeptide reads, in one-letter code: Small ribosomal subunit protein uS8 (131 aa).

Belongs to the universal ribosomal protein uS8 family. Part of the 30S ribosomal subunit. Contacts proteins S5 and S12.

Its function is as follows. One of the primary rRNA binding proteins, it binds directly to 16S rRNA central domain where it helps coordinate assembly of the platform of the 30S subunit. The chain is Small ribosomal subunit protein uS8 from Cupriavidus necator (strain ATCC 17699 / DSM 428 / KCTC 22496 / NCIMB 10442 / H16 / Stanier 337) (Ralstonia eutropha).